The primary structure comprises 259 residues: tRNA (guanine-N(7)-)-methyltransferase (259 aa).

Residues 1 to 73 (MGHHGQMHAQ…GPAEDPDRPG (73 aa)) are disordered. S-adenosyl-L-methionine contacts are provided by E91, E116, N143, and D166. D166 is an active-site residue. Substrate is bound by residues K170, D202, and 238–241 (TKYE).

Belongs to the class I-like SAM-binding methyltransferase superfamily. TrmB family.

The enzyme catalyses guanosine(46) in tRNA + S-adenosyl-L-methionine = N(7)-methylguanosine(46) in tRNA + S-adenosyl-L-homocysteine. Its pathway is tRNA modification; N(7)-methylguanine-tRNA biosynthesis. Catalyzes the formation of N(7)-methylguanine at position 46 (m7G46) in tRNA. The sequence is that of tRNA (guanine-N(7)-)-methyltransferase from Mycolicibacterium paratuberculosis (strain ATCC BAA-968 / K-10) (Mycobacterium paratuberculosis).